The chain runs to 766 residues: Coenzyme PQQ synthesis protein F (766 aa).

Histidine 49 serves as a coordination point for Zn(2+). Catalysis depends on glutamate 52, which acts as the Proton acceptor. Residues histidine 53 and glutamate 130 each contribute to the Zn(2+) site.

The protein belongs to the peptidase M16 family. The cofactor is Zn(2+).

It functions in the pathway cofactor biosynthesis; pyrroloquinoline quinone biosynthesis. Its function is as follows. Required for coenzyme pyrroloquinoline quinone (PQQ) biosynthesis. It is thought that this protein is a protease that cleaves peptides bond in a small peptide (gene pqqA), providing the glutamate and tyrosine residues which are necessary for the synthesis of PQQ. The polypeptide is Coenzyme PQQ synthesis protein F (pqqF) (Pseudomonas putida (strain ATCC 47054 / DSM 6125 / CFBP 8728 / NCIMB 11950 / KT2440)).